A 206-amino-acid polypeptide reads, in one-letter code: Small ribosomal subunit protein uS4 (206 aa).

An S4 RNA-binding domain is found at 96-156 (GRLDNVVYRM…EKAKKQSRVK (61 aa)).

The protein belongs to the universal ribosomal protein uS4 family. As to quaternary structure, part of the 30S ribosomal subunit. Contacts protein S5. The interaction surface between S4 and S5 is involved in control of translational fidelity.

Functionally, one of the primary rRNA binding proteins, it binds directly to 16S rRNA where it nucleates assembly of the body of the 30S subunit. With S5 and S12 plays an important role in translational accuracy. This Salmonella agona (strain SL483) protein is Small ribosomal subunit protein uS4.